We begin with the raw amino-acid sequence, 254 residues long: 5-oxoprolinase subunit A (254 aa).

Belongs to the LamB/PxpA family. Forms a complex composed of PxpA, PxpB and PxpC.

The enzyme catalyses 5-oxo-L-proline + ATP + 2 H2O = L-glutamate + ADP + phosphate + H(+). Its function is as follows. Catalyzes the cleavage of 5-oxoproline to form L-glutamate coupled to the hydrolysis of ATP to ADP and inorganic phosphate. The protein is 5-oxoprolinase subunit A of Rhodopseudomonas palustris (strain BisB5).